The sequence spans 203 residues: Large ribosomal subunit protein bL25 (203 aa).

The protein belongs to the bacterial ribosomal protein bL25 family. CTC subfamily. As to quaternary structure, part of the 50S ribosomal subunit; part of the 5S rRNA/L5/L18/L25 subcomplex. Contacts the 5S rRNA. Binds to the 5S rRNA independently of L5 and L18.

Functionally, this is one of the proteins that binds to the 5S RNA in the ribosome where it forms part of the central protuberance. This chain is Large ribosomal subunit protein bL25, found in Cereibacter sphaeroides (strain ATCC 17029 / ATH 2.4.9) (Rhodobacter sphaeroides).